A 59-amino-acid chain; its full sequence is Large ribosomal subunit protein uL30 (59 aa).

The protein belongs to the universal ribosomal protein uL30 family. As to quaternary structure, part of the 50S ribosomal subunit.

The chain is Large ribosomal subunit protein uL30 from Proteus mirabilis (strain HI4320).